The sequence spans 861 residues: MKYQLFLSLALCVGLGASAQTLPYQNPNLSAKERAVDLCSRLTLEEKAMLMLDESPAIPRLGIKKFFWWSEALHGAANMGNVTNFPEPVGMAASFNPHLLFKVFDIASTEFRAQYNHRMYDLNGEDMKMRSLSVWTPNVNIFRDPRWGRGQETYGEDPYLTSVMGVQVVKGLQGPEDARYRKLWACAKHYAVHSGPEYTRHTANLTDVSARDFWETYMPAFKTLVKDAKVREVMCAYQRLDDDPCCGSTRLLQQILRDEWGFEYLVVSDCGAVSDFYENHKSSSDAVHGTSKAVLAGTDVECGFNYAYKSLPEAVRKGLLSEKEVDKHVIRLLEGRFDLGEMDDPSLVEWSKIPYSAMSTKASANVALDMARQTIVLLQNKNNILPLKKNAEKIAIIGPNAHNEPMMWGNYNGTPNHTVTILDGVKAKQKKLVYIPGCDLTNDKVMECHLATDCVTPDGKKGLKGTFWNNTEMAGKPFTTEYYTKPVNVTTAGMHVFAPNLPIEDFSAKYETTFTAKEAGEYVVNVESTGHFELYVNGKQQFVNHIWRATPTRTVLKAEKGQKFDIEVRFQTVKTWGASMKIDVARELNIDYQETIAQLKGINKVIFCGGIAPSLEGEEMPVNIEGFKGGDRTSIELPKVQREFLKALKAAGKQVIYVNCSGSAIALQPETESCDAIVQAWYPGQEGGTAVADVLFGDYNPGGKLSVTFYKNDQQLPDYEDYSMKGRTYRYFDDALFPFGYGLSYTTFEVGEAKVEAATDGALYNVQIPVTNTGTKNGSETIQLYIRNLQDPDGPLKSLRGFERLDIKAGKTATANLKLTKESLEFWDAETNTMRTKPGKYEILYGTSSLDKDLKKLTITL.

The N-terminal stretch at 1 to 19 (MKYQLFLSLALCVGLGASA) is a signal peptide. D269 (nucleophile) is an active-site residue. The 143-residue stretch at 458 to 600 (DGKKGLKGTF…DYQETIAQLK (143 aa)) folds into the PA14 domain. E616 serves as the catalytic Proton donor/acceptor.

The protein belongs to the glycosyl hydrolase 3 family. As to quaternary structure, exists as a large polymeric species, presumably as a homononamer.

It carries out the reaction Hydrolysis of (1-&gt;4)-beta-D-xylans, to remove successive D-xylose residues from the non-reducing termini.. It catalyses the reaction Hydrolysis of terminal non-reducing alpha-L-arabinofuranoside residues in alpha-L-arabinosides.. The protein operates within glycan degradation; xylan degradation. Involved in degradation of plant cell wall polysaccharides. Has beta-xylosidase activity via its capacity to hydrolyze glycosidic linkages of beta-1,4-xylo-oligosaccharides of various lengths (X2 to X6), releasing xylose monomers. To a much lesser extent, also has alpha-L-arabinofuranosidase activity. Does not possess beta-D-glucosidase activity. Acts synergistically with Xyn10D-Fae1A to increase the release of xylose from xylan. This chain is Xylan 1,4-beta-xylosidase, found in Xylanibacter ruminicola (strain ATCC 19189 / DSM 19721 / CIP 105475 / JCM 8958 / 23) (Prevotella ruminicola).